A 282-amino-acid polypeptide reads, in one-letter code: Secretory carrier-associated membrane protein 1 (282 aa).

The tract at residues 1-49 (MSRYQSHSFDDGEINPFANPTSVPAATSKLSPLPPEPYDRGATMDIPLD) is disordered. Residues 1–117 (MSRYQSHSFD…EIPIHLQRIQ (117 aa)) are Cytoplasmic-facing. Over residues 18 to 30 (ANPTSVPAATSKL) the composition is skewed to polar residues. At serine 31 the chain carries Phosphoserine. A coiled-coil region spans residues 48-93 (LDSGKDLKAKEKELREKEAELKRREQEIKRKEDAIAQAGIVIEEKN). The next 4 membrane-spanning stretches (helical) occupy residues 118–138 (YVAFTSMLGLVVCLLWNIVAV), 150–170 (IWFLAIIYFISGVPGAYVMWY), 185–205 (FGWFFFTYLFHIAFCVFAAVA), and 233–253 (IFYFIGFGFFCLESLVSIWVI). At 254 to 282 (QQVYMYFRGSGKAAEMKQEATRRAMMAAL) the chain is on the cytoplasmic side.

This sequence belongs to the SCAMP family.

Its subcellular location is the cell membrane. The protein resides in the cytoplasmic vesicle. It localises to the secretory vesicle membrane. Probably involved in membrane trafficking. The protein is Secretory carrier-associated membrane protein 1 (SCAMP1) of Arabidopsis thaliana (Mouse-ear cress).